Consider the following 166-residue polypeptide: MFPMVTEFMNYGQQTVRAARYIGQGFMITLSHANRLPVTIQYPYEKLITSERFRGRIHFEFDKCIACEVCVRVCPIDLPVVDWKLETDIRKKRLLNYSIDFGICIFCGNCVEYCPTNCLSMTEEYELSTYDRHELNYNQIALGRLPMSIIDDYTIRTILNLPERKT.

4Fe-4S ferredoxin-type domains lie at 55–84 (GRIH…VDWK) and 95–124 (LNYS…MTEE). Cys64, Cys67, Cys70, Cys74, Cys104, Cys107, Cys110, and Cys114 together coordinate [4Fe-4S] cluster.

Belongs to the complex I 23 kDa subunit family. As to quaternary structure, NDH is composed of at least 16 different subunits, 5 of which are encoded in the nucleus. It depends on [4Fe-4S] cluster as a cofactor.

The protein resides in the plastid. Its subcellular location is the chloroplast thylakoid membrane. It catalyses the reaction a plastoquinone + NADH + (n+1) H(+)(in) = a plastoquinol + NAD(+) + n H(+)(out). The catalysed reaction is a plastoquinone + NADPH + (n+1) H(+)(in) = a plastoquinol + NADP(+) + n H(+)(out). NDH shuttles electrons from NAD(P)H:plastoquinone, via FMN and iron-sulfur (Fe-S) centers, to quinones in the photosynthetic chain and possibly in a chloroplast respiratory chain. The immediate electron acceptor for the enzyme in this species is believed to be plastoquinone. Couples the redox reaction to proton translocation, and thus conserves the redox energy in a proton gradient. In Encelia californica (Bush sunflower), this protein is NAD(P)H-quinone oxidoreductase subunit I, chloroplastic.